Here is a 3088-residue protein sequence, read N- to C-terminus: Protein prune homolog 2 (3088 aa).

Met1 is subject to N-acetylmethionine. Residues 109–111 (GSS) carry the DHH motif motif. Disordered stretches follow at residues 433–468 (IRSSRSSKESSVFLSDDSPVGEGAGPHHTLLPGLDS), 490–628 (HFDL…EPAS), 673–759 (SSEQ…QGTN), 771–795 (SGRSPTAMPEPWGNPTDDGEPAAVA), 846–909 (SELL…PKTR), 952–1080 (SNLG…SSYD), 1192–1211 (SDEHTKDSAPSEHHTLNEKS), 1231–1371 (SFML…LVAS), 1413–1452 (RDVQTGMSADNLQPKDTHEKHLMSQRNSGETTETSDGMNF), 1472–1491 (LEPENVGGGPPHRVPRSLDF), 1515–1585 (VKGS…QESE), 1632–1698 (DSFS…EESI), 1741–1768 (LDSSEPAENENKSNPFCDNQQSSPDPWT), 1782–1813 (VEKEKRSSPETGTTGDVAWQISPKASFPKNED), 2089–2114 (ILTHCEHDSNSQASDSPDICHDSEAK), 2173–2215 (YQAD…PDMA), 2240–2260 (QEPTPEGDGSWISDSFSPESQ), 2492–2542 (SDLP…KNED), 2589–2667 (TQLA…SELG), 2687–2710 (ALEEASGPVSQSQKSKSRGRAGPD), 2814–2833 (QSEGSILSDDNLDSPDEIDI), and 2841–2875 (PDEADSFEYTGHDPTANKDSGQESESIPEYTAEEE). The segment covering 503 to 512 (SGQSQQSSHS) has biased composition (low complexity). Residues 562 to 582 (SLVEHDEEFVQRQDSPRDNSE) are compositionally biased toward basic and acidic residues. 2 stretches are compositionally biased toward polar residues: residues 613–625 (MNSLVESSPSTEE) and 673–684 (SSEQESVFQSPE). The segment covering 685–699 (SWKEHKPSSIDRRAS) has biased composition (basic and acidic residues). Residues 750 to 759 (LPNTSPQGTN) are compositionally biased toward polar residues. Residues 846–857 (SELLDNSPSEIN) show a composition bias toward polar residues. Residues 865-876 (WGKKNNDSRDHI) are compositionally biased toward basic and acidic residues. Positions 881-894 (NPSSDLDHTWTNSK) are enriched in polar residues. A compositionally biased stretch (basic and acidic residues) spans 895 to 909 (PPKEDQNGLVDPKTR). The span at 964-977 (DTNYSTSDSYTSPT) shows a compositional bias: low complexity. The span at 980-1000 (GDEKETEHKPFAKEEGFESKD) shows a compositional bias: basic and acidic residues. Polar residues-rich tracts occupy residues 1001–1027 (GNSTAEETDIPPQSLQQSSRNRISSGP) and 1037–1048 (HTDNSSEINTTH). 5 stretches are compositionally biased toward basic and acidic residues: residues 1049–1062 (NLDENELKTEHTDG), 1192–1208 (SDEHTKDSAPSEHHTLN), 1282–1293 (HLDKQDTERETL), 1314–1339 (DPWKGHGDGQSESEKEAQGATDRGHL), and 1425–1434 (QPKDTHEKHL). Polar residues predominate over residues 1436 to 1450 (SQRNSGETTETSDGM). Residues 1537–1585 (SSEYTHSSASSPELNDSSVALSSWGQQPSSGYQEENQGNWSEQNHQESE) are compositionally biased toward polar residues. Residues 1687–1698 (SDDDSVGGEESI) show a composition bias toward acidic residues. Residues 1752-1768 (KSNPFCDNQQSSPDPWT) are compositionally biased toward polar residues. Basic and acidic residues-rich tracts occupy residues 2516–2542 (EKTIPTKEPEQIKSEYKEERCTEKNED) and 2604–2622 (NERKGLSAEKMSSKSDTRS). Residues 2623 to 2632 (SFESPAQDQS) are compositionally biased toward polar residues. A compositionally biased stretch (acidic residues) spans 2823–2833 (DNLDSPDEIDI). One can recognise a CRAL-TRIO domain in the interval 2895–3056 (DMKVIEPYRR…SIIKLDEELR (162 aa)).

The protein belongs to the PPase class C family. Prune subfamily. In terms of tissue distribution, a high level of expression seen in the nervous system (brain, cerebellum and spinal cord) as well as adrenal gland. Expressed at high levels in noneuroblastoma, rhabdomyosarcoma, melanoma and some osteosarcoma cell lines, whereas at only low levels in cancer cell lines of liver, breast, thyroid and colon. Expression is significantly higher in favorable tumors than aggressive ones.

The protein localises to the cytoplasm. In terms of biological role, may play an important role in regulating differentiation, survival and aggressiveness of the tumor cells. The protein is Protein prune homolog 2 (PRUNE2) of Homo sapiens (Human).